Reading from the N-terminus, the 380-residue chain is Maintenance of mitochondrial morphology protein 1 (380 aa).

Over 1–64 (MQGRAIWAEG…IVPSLSFIQG (64 aa)) the chain is Lumenal. A helical transmembrane segment spans residues 65–85 (FMAGQAVLLMLFLGLFRYFFM). Over 86–380 (TSSPGTRAQQ…IGTSPADPLA (295 aa)) the chain is Cytoplasmic. Residues 147–369 (APESLDWLNV…WPHFWHIPLP (223 aa)) enclose the SMP-LTD domain.

It belongs to the MMM1 family. As to quaternary structure, homodimer. Component of the ER-mitochondria encounter structure (ERMES) or MDM complex, composed of MMM1, MDM10, MDM12 and MDM34. An MMM1 homodimer associates with one molecule of MDM12 on each side in a pairwise head-to-tail manner, and the SMP-LTD domains of MMM1 and MDM12 generate a continuous hydrophobic tunnel for phospholipid trafficking.

The protein resides in the endoplasmic reticulum membrane. Functionally, component of the ERMES/MDM complex, which serves as a molecular tether to connect the endoplasmic reticulum (ER) and mitochondria. Components of this complex are involved in the control of mitochondrial shape and protein biogenesis, and function in nonvesicular lipid trafficking between the ER and mitochondria. The MDM12-MMM1 subcomplex functions in the major beta-barrel assembly pathway that is responsible for biogenesis of all outer membrane beta-barrel proteins, and acts in a late step after the SAM complex. The MDM10-MDM12-MMM1 subcomplex further acts in the TOM40-specific pathway after the action of the MDM12-MMM1 complex. Essential for establishing and maintaining the structure of mitochondria and maintenance of mtDNA nucleoids. The polypeptide is Maintenance of mitochondrial morphology protein 1 (Malassezia globosa (strain ATCC MYA-4612 / CBS 7966) (Dandruff-associated fungus)).